We begin with the raw amino-acid sequence, 118 residues long: MLDSLKQKKNFQRIKMRIKTGDLVKVINGKDKGKTGEVLKTIPLENRVVVKGINLRTKHVKPTQEGETGRILTEEASLHASNVMFFSKDKNLTSKIEYFIDKEGVKKRRLKKTGEVID.

It belongs to the universal ribosomal protein uL24 family. As to quaternary structure, part of the 50S ribosomal subunit.

Its function is as follows. One of two assembly initiator proteins, it binds directly to the 5'-end of the 23S rRNA, where it nucleates assembly of the 50S subunit. In terms of biological role, one of the proteins that surrounds the polypeptide exit tunnel on the outside of the subunit. This Prochlorococcus marinus (strain AS9601) protein is Large ribosomal subunit protein uL24.